The sequence spans 82 residues: MSQAGAQEAPIKKKRPPVKDEDLKGARGNLTKNQEIKSKTYQVMRECEQAGSAAPSVFSRTRTGTETVFEKPKAGPTKSVFG.

Disordered stretches follow at residues 1 to 33 (MSQA…LTKN) and 49 to 82 (QAGS…SVFG). Residue S2 is modified to Phosphoserine. Positions 10 to 18 (PIKKKRPPV) match the Nuclear localization signal motif.

Belongs to the MUSTN1 family. In terms of tissue distribution, expression in skeletal muscle is reduced during limb unloading but increases during the active recovery phase that follows.

It localises to the nucleus. The protein resides in the cytoplasm. It is found in the secreted. Its subcellular location is the extracellular space. In terms of biological role, required for chondrocyte development and proliferation. Plays a role in myoblast differentiation and fusion. Modulates skeletal muscle extracellular matrix composition. Plays a role in skeletal muscle function. Plays a role in glucose homeostasis. The chain is Musculoskeletal embryonic nuclear protein 1 (MUSTN1) from Homo sapiens (Human).